Consider the following 391-residue polypeptide: Pectin acetylesterase 7 (391 aa).

The first 23 residues, 1–23 (MGRLKQCWSSLLVLAVLVIGTGA), serve as a signal peptide directing secretion. Residues serine 171, aspartate 267, and histidine 334 each act as charge relay system in the active site.

The protein belongs to the pectinacetylesterase family.

The protein localises to the secreted. It localises to the cell wall. Hydrolyzes acetyl esters in homogalacturonan regions of pectin. In type I primary cell wall, galacturonic acid residues of pectin can be acetylated at the O-2 and O-3 positions. Decreasing the degree of acetylation of pectin gels in vitro alters their physical properties. The sequence is that of Pectin acetylesterase 7 from Arabidopsis thaliana (Mouse-ear cress).